The following is a 38-amino-acid chain: 4 kDa defensin (38 aa).

Cystine bridges form between Cys-4/Cys-25, Cys-11/Cys-33, and Cys-15/Cys-35.

Belongs to the invertebrate defensin family. Type 2 subfamily.

Its subcellular location is the secreted. Dual-function peptide with antimicrobial and potassium channel-blocking activities. Shows inhibitory activity against Gram-positive bacteria such as M.luteus, S.aureus, B.subtilis, and M.luteus as well as methicillin-resistant S.aureus (MIC=0.1-20 uM). Does not act on bacteria by disrupting membranes. Also moderately inhibits Kv1.1/KCNA1, Kv1.2/KCNA2, and Kv1.3/KCNA3 potassium channels. Inhibits potassium channels by interacting with the pore region. Does not show hemolytic activity. This is 4 kDa defensin from Leiurus hebraeus (Hebrew deathstalker scorpion).